The sequence spans 283 residues: Pantothenate synthetase (283 aa).

An ATP-binding site is contributed by 30 to 37; it reads MGNLHDGH. His-37 functions as the Proton donor in the catalytic mechanism. (R)-pantoate is bound at residue Gln-61. Gln-61 provides a ligand contact to beta-alanine. Residue 149 to 152 coordinates ATP; sequence GEKD. Gln-155 is a binding site for (R)-pantoate. 186-189 serves as a coordination point for ATP; it reads LSSR.

The protein belongs to the pantothenate synthetase family. Homodimer.

The protein localises to the cytoplasm. It catalyses the reaction (R)-pantoate + beta-alanine + ATP = (R)-pantothenate + AMP + diphosphate + H(+). It functions in the pathway cofactor biosynthesis; (R)-pantothenate biosynthesis; (R)-pantothenate from (R)-pantoate and beta-alanine: step 1/1. Functionally, catalyzes the condensation of pantoate with beta-alanine in an ATP-dependent reaction via a pantoyl-adenylate intermediate. The sequence is that of Pantothenate synthetase from Escherichia coli (strain ATCC 8739 / DSM 1576 / NBRC 3972 / NCIMB 8545 / WDCM 00012 / Crooks).